A 123-amino-acid chain; its full sequence is MGTKLSVSLEGASTPETAPRVDRPPTFDPQYGFERPRKVREMKATWEEMEQWKLKPAQRDYCAHHLISLMKCQTQNAPFAGHACDGERGAWDKCEYDDHIMRIKEFERERRLLQRQARKEATA.

A disordered region spans residues 1 to 32 (MGTKLSVSLEGASTPETAPRVDRPPTFDPQYG). A CHCH domain is found at 59–102 (RDYCAHHLISLMKCQTQNAPFAGHACDGERGAWDKCEYDDHIMR). 2 consecutive short sequence motifs (cx9C motif) follow at residues 62–72 (CAHHLISLMKC) and 84–94 (CDGERGAWDKC). Intrachain disulfides connect Cys62–Cys94 and Cys72–Cys84.

It belongs to the complex I NDUFB7 subunit family. Complex I is composed of 45 different subunits.

The protein resides in the mitochondrion. The protein localises to the mitochondrion inner membrane. It is found in the mitochondrion intermembrane space. In terms of biological role, accessory subunit of the mitochondrial membrane respiratory chain NADH dehydrogenase (Complex I), that is believed not to be involved in catalysis. Complex I functions in the transfer of electrons from NADH to the respiratory chain. The immediate electron acceptor for the enzyme is believed to be ubiquinone. In Caenorhabditis elegans, this protein is NADH dehydrogenase [ubiquinone] 1 beta subcomplex subunit 7.